Reading from the N-terminus, the 348-residue chain is Nicotinate-nucleotide--dimethylbenzimidazole phosphoribosyltransferase (348 aa).

The active-site Proton acceptor is the Glu316.

Belongs to the CobT family.

It catalyses the reaction 5,6-dimethylbenzimidazole + nicotinate beta-D-ribonucleotide = alpha-ribazole 5'-phosphate + nicotinate + H(+). The protein operates within nucleoside biosynthesis; alpha-ribazole biosynthesis; alpha-ribazole from 5,6-dimethylbenzimidazole: step 1/2. In terms of biological role, catalyzes the synthesis of alpha-ribazole-5'-phosphate from nicotinate mononucleotide (NAMN) and 5,6-dimethylbenzimidazole (DMB). The sequence is that of Nicotinate-nucleotide--dimethylbenzimidazole phosphoribosyltransferase from Xanthomonas campestris pv. campestris (strain B100).